Here is a 409-residue protein sequence, read N- to C-terminus: Putative kinase Y4dM (409 aa).

Catalysis depends on D293, which acts as the Proton acceptor.

The protein belongs to the HipA Ser/Thr kinase family.

In Sinorhizobium fredii (strain NBRC 101917 / NGR234), this protein is Putative kinase Y4dM.